Consider the following 873-residue polypeptide: Leucine--tRNA ligase (873 aa).

The 'HIGH' region signature appears at proline 41 to histidine 51. The 'KMSKS' region signature appears at lysine 645–serine 649. Position 648 (lysine 648) interacts with ATP.

Belongs to the class-I aminoacyl-tRNA synthetase family.

It is found in the cytoplasm. It catalyses the reaction tRNA(Leu) + L-leucine + ATP = L-leucyl-tRNA(Leu) + AMP + diphosphate. This is Leucine--tRNA ligase from Cereibacter sphaeroides (strain ATCC 17025 / ATH 2.4.3) (Rhodobacter sphaeroides).